The sequence spans 434 residues: Cysteine proteinase 6 (434 aa).

Residues 1-19 form the signal peptide; it reads MKVLSALCVLLVSVATAKQ. Positions 20–113 are cleaved as a propeptide — activation peptide; it reads QLSELQYRNA…SEKVFGGVQA (94 aa). Disulfide bonds link cysteine 133–cysteine 178 and cysteine 169–cysteine 211. Cysteine 136 is a catalytic residue. N-linked (GlcNAc...) asparagine glycosylation occurs at asparagine 227. Cysteine 269 and cysteine 416 are joined by a disulfide. The active site involves histidine 276. The disordered stretch occupies residues 285-384; sequence SGSSGSQSQS…GGNSNSGDYP (100 aa). Residues 288–347 are compositionally biased toward low complexity; that stretch reads SGSQSQSAGSQSQSSNNNWSESSQSQDSNSWSQSSQSQSSQDSNSWSQSSQSQGSNSFTG. N-linked (GlcNAc...) asparagine glycosylation occurs at asparagine 305. Over residues 348 to 358 the composition is skewed to gly residues; the sequence is AGTGSGSGSVS. Low complexity predominate over residues 359–381; sequence GSGSASGSSSFSGSSNGGNSNSG. Asparagine 394 is an active-site residue.

The protein belongs to the peptidase C1 family.

Its subcellular location is the lysosome. The sequence is that of Cysteine proteinase 6 (cprF) from Dictyostelium discoideum (Social amoeba).